Reading from the N-terminus, the 328-residue chain is DNA-directed RNA polymerase subunit alpha (328 aa).

An alpha N-terminal domain (alpha-NTD) region spans residues methionine 1–glutamate 234. The tract at residues isoleucine 268–lysine 328 is alpha C-terminal domain (alpha-CTD).

This sequence belongs to the RNA polymerase alpha chain family. In terms of assembly, in plastids the minimal PEP RNA polymerase catalytic core is composed of four subunits: alpha, beta, beta', and beta''. When a (nuclear-encoded) sigma factor is associated with the core the holoenzyme is formed, which can initiate transcription.

The protein localises to the plastid. The protein resides in the chloroplast. It catalyses the reaction RNA(n) + a ribonucleoside 5'-triphosphate = RNA(n+1) + diphosphate. Functionally, DNA-dependent RNA polymerase catalyzes the transcription of DNA into RNA using the four ribonucleoside triphosphates as substrates. In Citrus sinensis (Sweet orange), this protein is DNA-directed RNA polymerase subunit alpha.